The sequence spans 289 residues: Glucosamine-6-phosphate deaminase 1 (289 aa).

D72 (proton acceptor; for enolization step) is an active-site residue. D141 (for ring-opening step) is an active-site residue. The active-site Proton acceptor; for ring-opening step is the H143. The active-site For ring-opening step is the E148. Residue T161 is modified to Phosphothreonine.

It belongs to the glucosamine/galactosamine-6-phosphate isomerase family. Homohexamer. In terms of tissue distribution, widely expressed. Detected in brain, liver, kidney, muscle, ovary, testis, spermatids and spermatozoa. In spermatids, located close to the developing acrosome vesicle. In spermatozoa, found close to the acrosomal region.

It localises to the cytoplasm. It carries out the reaction alpha-D-glucosamine 6-phosphate + H2O = beta-D-fructose 6-phosphate + NH4(+). The protein operates within nucleotide-sugar biosynthesis; UDP-N-acetyl-alpha-D-glucosamine biosynthesis; alpha-D-glucosamine 6-phosphate from D-fructose 6-phosphate: step 1/1. With respect to regulation, allosterically activated by N-acetylglucosamine-6-phosphate (GlcNAc6P). In terms of biological role, catalyzes the reversible conversion of alpha-D-glucosamine 6-phosphate (GlcN-6P) into beta-D-fructose 6-phosphate (Fru-6P) and ammonium ion, a regulatory reaction step in de novo uridine diphosphate-N-acetyl-alpha-D-glucosamine (UDP-GlcNAc) biosynthesis via hexosamine pathway. Deamination is coupled to aldo-keto isomerization mediating the metabolic flux from UDP-GlcNAc toward Fru-6P. At high ammonium level can drive amination and isomerization of Fru-6P toward hexosamines and UDP-GlcNAc synthesis. Has a role in fine tuning the metabolic fluctuations of cytosolic UDP-GlcNAc and their effects on hyaluronan synthesis that occur during tissue remodeling. Seems to trigger calcium oscillations in mammalian eggs. These oscillations serve as the essential trigger for egg activation and early development of the embryo. This Mus musculus (Mouse) protein is Glucosamine-6-phosphate deaminase 1.